The sequence spans 1130 residues: MGKLIRMGTQERRLLRPKRLHWSRLLFLLGMLIIGSTYQHLRRPQNPPSMWTKVSSQQPIKLAVRDLPNNEMAVAGSDPPEASSEVEDGMLAAQDTVIMDEAAPSIAMEDTPNPPRTTKIPPASLKNSYSPTTAGTRRQKENIPPTPSGAPSHFISTPGRQRVKSYIPKPRGERKNSSPTHAREKGRTHTPSPAGAHTISPTATVRDRETMATYRLLETRFERTAGETTAASLKRMVLNTPTFLTHEVETNLMTSSSLVGKNTAVSLRKGERNISTTPQGAVPQHTPATSEEQMTVSTRMGSIPATIEGSTAARRINNPLSRTSAPAIRIASATNREKRPSTAPSTLVTPKATMSTQVHRCVVVEPAPAVPMTPSPGVTSILFPETPSSGPSALPPGWPNLHPKAEYPPDLFSVEDRRQGWVVLHIFGMMYVFVALAIVCDEYFVPALGVITHKLQISEDVAGATFMAAGGSAPELFTSLIGVFISHSNVGIGTIVGSAVFNILFVIGTCALFSREILNLTWWPLFRDVSFYILDLSMLIVFFLDSFIAWWESLLLLLAYALYVFTMKWNKQIELWVKEQLSRRPVAKVMALGDLSKPSEDAVEENEQQDSKKLKLPSVLTRGSSSASLHNSIIRNTIYHLMLHSLDPLGEARPSKDKQESLNQEARVLSQTKAESSPDEDEPAELPAVTVTPAPAPDAKGDQEDDPGCQEDVDEAERRGEMTGEEGEKETETEGKKDEQEGETEAERKEDEQEEETEAEGKEQEGETEAEGKEDEQEGETEAEGKKDEQEGETEAEGKEEQEGETEAEGKEDEQEGETEAEGKEEQEGETEAESKEVEQERETEAEGKDKHEGQGETQPDDTEVKDGEGETEANAEDQCEATQGEKGADGGGESDGGDSEEEEDEEDEEEEEEEDEEEEEEENEEPLSLEWPDSRQKQAIYLFLLPIVFPLWLTIPDVRRQESRKFFVITFLGSIIWIAMFSYLMVWWAHQVGETIGISEEIMGLTILAAGTSIPDLITSVIVARKGLGDMAVSSSVGSNIFDITVGLPVPWLLFSLINALQPVPVSSNGLFCAIVLLFLMLLFVIFSIASCKWRMNKILGFTMFLLYFVFLVISVMLEDRIISCPVSV.

Over 1 to 419 the chain is Extracellular; the sequence is MGKLIRMGTQ…DLFSVEDRRQ (419 aa). Residues 104–209 form a disordered region; sequence PSIAMEDTPN…SPTATVRDRE (106 aa). Residues 125-136 show a composition bias toward polar residues; it reads LKNSYSPTTAGT. Positions 170 to 187 are enriched in basic and acidic residues; the sequence is PRGERKNSSPTHAREKGR. N-linked (GlcNAc...) asparagine glycosylation is found at asparagine 176 and asparagine 273. The interval 274-295 is disordered; that stretch reads ISTTPQGAVPQHTPATSEEQMT. Polar residues predominate over residues 286–295; that stretch reads TPATSEEQMT. The helical transmembrane segment at 420–440 threads the bilayer; it reads GWVVLHIFGMMYVFVALAIVC. At 441-464 the chain is on the cytoplasmic side; sequence DEYFVPALGVITHKLQISEDVAGA. The Alpha-1 repeat unit spans residues 461-501; sequence VAGATFMAAGGSAPELFTSLIGVFISHSNVGIGTIVGSAVF. Residues 465–485 form a helical membrane-spanning segment; the sequence is TFMAAGGSAPELFTSLIGVFI. Topologically, residues 486–489 are extracellular; the sequence is SHSN. Residues 490-510 traverse the membrane as a helical segment; that stretch reads VGIGTIVGSAVFNILFVIGTC. Residues 511-530 lie on the Cytoplasmic side of the membrane; that stretch reads ALFSREILNLTWWPLFRDVS. The helical transmembrane segment at 531–551 threads the bilayer; sequence FYILDLSMLIVFFLDSFIAWW. Position 552 (glutamate 552) is a topological domain, extracellular. A helical transmembrane segment spans residues 553–573; that stretch reads SLLLLLAYALYVFTMKWNKQI. The Cytoplasmic segment spans residues 574 to 938; that stretch reads ELWVKEQLSR…SLEWPDSRQK (365 aa). The interval 598 to 619 is disordered; sequence PSEDAVEENEQQDSKKLKLPSV. At serine 625 the chain carries Phosphoserine. Residues 650–932 form a disordered region; the sequence is GEARPSKDKQ…ENEEPLSLEW (283 aa). The segment covering 661 to 675 has biased composition (polar residues); that stretch reads SLNQEARVLSQTKAE. Threonine 690 bears the Phosphothreonine mark. Positions 703–715 are enriched in acidic residues; that stretch reads QEDDPGCQEDVDE. Basic and acidic residues predominate over residues 730–751; sequence ETETEGKKDEQEGETEAERKED. Acidic residues-rich tracts occupy residues 766 to 782 and 802 to 820; these read GETEAEGKEDEQEGETE and QEGETEAEGKEDEQEGETE. The segment covering 833 to 855 has biased composition (basic and acidic residues); it reads AESKEVEQERETEAEGKDKHEGQ. Acidic residues-rich tracts occupy residues 870–880 and 896–928; these read GETEANAEDQC and DGGDSEEEEDEEDEEEEEEEDEEEEEEENEEPL. Residues 939-959 traverse the membrane as a helical segment; sequence QAIYLFLLPIVFPLWLTIPDV. Topologically, residues 960-966 are extracellular; the sequence is RRQESRK. The helical transmembrane segment at 967 to 987 threads the bilayer; sequence FFVITFLGSIIWIAMFSYLMV. Over 988–1002 the chain is Cytoplasmic; sequence WWAHQVGETIGISEE. Residues 1003–1023 form a helical membrane-spanning segment; the sequence is IMGLTILAAGTSIPDLITSVI. An Alpha-2 repeat occupies 1010-1041; sequence AAGTSIPDLITSVIVARKGLGDMAVSSSVGSN. The Extracellular segment spans residues 1024–1041; that stretch reads VARKGLGDMAVSSSVGSN. The chain crosses the membrane as a helical span at residues 1042 to 1062; sequence IFDITVGLPVPWLLFSLINAL. The Cytoplasmic segment spans residues 1063–1070; it reads QPVPVSSN. Residues 1071–1091 traverse the membrane as a helical segment; that stretch reads GLFCAIVLLFLMLLFVIFSIA. Over 1092–1099 the chain is Extracellular; the sequence is SCKWRMNK. Residues 1100–1120 traverse the membrane as a helical segment; sequence ILGFTMFLLYFVFLVISVMLE. Topologically, residues 1121 to 1130 are cytoplasmic; it reads DRIISCPVSV.

It belongs to the Ca(2+):cation antiporter (CaCA) (TC 2.A.19) family. SLC24A subfamily. The uncleaved signal sequence is required for efficient membrane targeting and proper membrane integration and topology.

The protein resides in the cell membrane. It carries out the reaction Ca(2+)(out) + K(+)(out) + 4 Na(+)(in) = Ca(2+)(in) + K(+)(in) + 4 Na(+)(out). In terms of biological role, calcium, potassium:sodium antiporter that transports 1 Ca(2+) and 1 K(+) in exchange for 4 Na(+). Critical component of the visual transduction cascade, controlling the calcium concentration of outer segments during light and darkness. Light causes a rapid lowering of cytosolic free calcium in the outer segment of both retinal rod and cone photoreceptors and the light-induced lowering of calcium is caused by extrusion via this protein which plays a key role in the process of light adaptation. The chain is Sodium/potassium/calcium exchanger 1 from Mus musculus (Mouse).